A 463-amino-acid chain; its full sequence is Hexokinase-7 (463 aa).

A Hexokinase domain is found at 7-456 (AAAEQVVAAL…SGLGAALIAA (450 aa)). Residues 62–199 (NGTEEGLFYA…GLDMRVSALI (138 aa)) form a hexokinase small subdomain region. ADP is bound by residues G76, T77, and N78. Residues T165, K166, N200, and D201 each contribute to the D-glucose site. The hexokinase large subdomain stretch occupies residues 200–445 (NDTVGTLAAG…KSVAVKLAND (246 aa)). T224 lines the ADP pocket. Residues N227, E255, and E286 each contribute to the D-glucose site. Residue G410 participates in ADP binding.

This sequence belongs to the hexokinase family. In terms of tissue distribution, expressed in roots, leaves, flowers, immature seeds and seed coat.

It is found in the cytoplasm. It catalyses the reaction a D-hexose + ATP = a D-hexose 6-phosphate + ADP + H(+). The enzyme catalyses D-fructose + ATP = D-fructose 6-phosphate + ADP + H(+). The catalysed reaction is D-glucose + ATP = D-glucose 6-phosphate + ADP + H(+). It functions in the pathway carbohydrate metabolism; hexose metabolism. It participates in carbohydrate degradation; glycolysis; D-glyceraldehyde 3-phosphate and glycerone phosphate from D-glucose: step 1/4. Its function is as follows. Fructose and glucose phosphorylating enzyme. Functions in sugar signaling via a glycolysis-dependent manner under aerobic conditions, but its signaling role is suppressed when oxygen is deficient. In Oryza sativa subsp. japonica (Rice), this protein is Hexokinase-7 (HXK7).